The chain runs to 830 residues: MNYIPTQTFYGRRWRPRPAARPWPLQATPVAPVVPDFQAQQMQQLISAVNALTMRQNAIAPARPPKPKKKKTTKPKPKTQPKKINGKTQQQKKKDKQADKKKKKPGKRERMCMKIENDCIFEVKHEGKVTGYACLVGDKVMKPAHVKGVIDNADLAKLAFKKSSKYDLECAQIPVHMRSDASKYTHEKPEGHYNWHHGAVQYSGGRFTIPTGAGKPGDSGRPIFDNKGRVVAIVLGGANEGSRTALSVVTWNKDMVTRVTPEGSEEWSAPLITAMCVLANATFPCFQPPCVPCCYENNAEATLRMLEDNVDRPGYYDLLQAALTCRNGTRHRRSVSQHFNVYKATRPYIAYCADCGAGHSCHSPVAIEAVRSEATDGMLKIQFSAQIGIDKSDNHDYTKIRYADGHAIENAVRSSLKVATSGDCFVHGTMGHFILAKCPPGEFLQVSIQDTRNAVRACRIQYHHDPQPVGREKFTIRPHYGKEIPCTTYQQTTAETVEEIDMHMPPDTPDRTLLSQQSGNVKITVGGKKVKYNCTCGTGNVGTTNSDMTINTCLIEQCHVSVTDHKKWQFNSPFVPRADEPARKGKVHIPFPLDNITCRVPMAREPTVIHGKREVTLHLHPDHPTLFSYRTLGEDPQYHEEWVTAAVERTIPVPVDGMEYHWGNNDPVRLWSQLTTEGKPHGWPHQIVQYYYGLYPAATVSAVVGMSLLALISIFASCYMLVAARSKCLTPYALTPGAAVPWTLGILCCAPRAHAASVAETMAYLWDQNQALFWLEFAAPVACILIITYCLRNVLCCCKSLSFLSATEPRGHRQSLRTFDSNAERGGVPV.

Positions 58 to 109 (AIAPARPPKPKKKKTTKPKPKTQPKKINGKTQQQKKKDKQADKKKKKPGKRE) are disordered. Residues 65–107 (PKPKKKKTTKPKPKTQPKKINGKTQQQKKKDKQADKKKKKPGK) show a composition bias toward basic residues. Residues 94-106 (KDKQADKKKKKPG) form a ribosome-binding region. Cysteines 119 and 134 form a disulfide. In terms of domain architecture, Peptidase S3 spans 119–267 (CIFEVKHEGK…RVTPEGSEEW (149 aa)). Residues histidine 145, aspartate 167, and serine 219 each act as charge relay system in the active site. N-linked (GlcNAc...) asparagine; by host glycans are attached at residues asparagine 280, asparagine 327, asparagine 533, and asparagine 595. Residues 702–722 (AVVGMSLLALISIFASCYMLV) traverse the membrane as a helical segment. 4 S-palmitoyl cysteine; by host lipidation sites follow: cysteine 718, cysteine 728, cysteine 748, and cysteine 749. The interval 728–748 (CLTPYALTPGAAVPWTLGILC) is transient transmembrane before p62-6K protein processing. Helical transmembrane passes span 771-791 (ALFW…TYCL) and 793-813 (NVLC…RGHR).

In terms of assembly, homodimer. Homomultimer. Interacts with host karyopherin KPNA4; this interaction allows the nuclear import of the viral capsid protein. Precursor of protein E3/E2: The precursor of protein E3/E2 and E1 form a heterodimer shortly after synthesis. Interacts with host IRAK1; the interaction leads to inhibition of IRAK1-dependent signaling. As to quaternary structure, processing of the precursor of protein E3/E2 into E2 and E3 results in a heterodimer of the spike glycoproteins E2 and E1. Spike at virion surface are constituted of three E2-E1 heterodimers. Interacts with 6K protein. Interacts with host MXRA8; this interaction mediates virus entry. Post-translationally, specific enzymatic cleavages in vivo yield mature proteins. Capsid protein is auto-cleaved during polyprotein translation, unmasking a signal peptide at the N-terminus of the precursor of E3/E2. The remaining polyprotein is then targeted to the host endoplasmic reticulum, where host signal peptidase cleaves it into pE2 and TF. pE2 is further processed to mature E3 and E2 by host furin in trans-Golgi vesicle.

The protein resides in the virion. It localises to the host cytoplasm. Its subcellular location is the host cell membrane. It is found in the host nucleus. The protein localises to the virion membrane. The catalysed reaction is Autocatalytic release of the core protein from the N-terminus of the togavirus structural polyprotein by hydrolysis of a -Trp-|-Ser- bond.. Functionally, forms an icosahedral capsid with a T=4 symmetry composed of 240 copies of the capsid protein surrounded by a lipid membrane through which penetrate 80 spikes composed of trimers of E1-E2 heterodimers. The capsid protein binds to the viral RNA genome at a site adjacent to a ribosome binding site for viral genome translation following genome release. Possesses a protease activity that results in its autocatalytic cleavage from the nascent structural protein. Following its self-cleavage, the capsid protein transiently associates with ribosomes, and within several minutes the protein binds to viral RNA and rapidly assembles into icosahedric core particles. The resulting nucleocapsid eventually associates with the cytoplasmic domain of the spike glycoprotein E2 at the cell membrane, leading to budding and formation of mature virions. In case of infection, new virions attach to target cells and after clathrin-mediated endocytosis their membrane fuses with the host endosomal membrane. This leads to the release of the nucleocapsid into the cytoplasm, followed by an uncoating event necessary for the genomic RNA to become accessible. The uncoating might be triggered by the interaction of capsid proteins with ribosomes. Binding of ribosomes would release the genomic RNA since the same region is genomic RNA-binding and ribosome-binding. Specifically inhibits interleukin-1 receptor-associated kinase 1/IRAK1-dependent signaling during viral entry, representing a means by which the alphaviruses may evade innate immune detection and activation prior to viral gene expression. Provides the signal sequence for p62 (E3/E2) translocation to the host endoplasmic reticulum. Mediates pH protection of E1 during secretory pathway trans- port. Its function is as follows. Plays a role in viral attachment to target host cell, by binding to the cell receptor. Synthesized as a p62 precursor which is processed by furin at the cell membrane just before virion budding, giving rise to E2-E1 heterodimer. The p62-E1 heterodimer is stable, whereas E2-E1 is unstable and dissociate at low pH. p62 is processed at the last step, presumably to avoid E1 fusion activation before its final export to cell surface. E2 C-terminus contains a transitory transmembrane that would be disrupted by palmitoylation, resulting in reorientation of the C-terminal tail from lumenal to cytoplasmic side. This step is critical since E2 C-terminus is involved in budding by interacting with capsid proteins. This release of E2 C-terminus in cytoplasm occurs lately in protein export, and precludes premature assembly of particles at the endoplasmic reticulum membrane. In terms of biological role, virion component that may play a role during viral assembly. This chain is Frameshifted structural polyprotein, found in Aedes (Middle-African hedgehog).